Consider the following 102-residue polypeptide: NADH-quinone oxidoreductase subunit K (102 aa).

3 helical membrane passes run 5–25 (ITHYLTVSALMFTIGIAGIFL), 31–51 (IIILMSIELILLSVNINFVAF), and 66–86 (FVLTVAAAEAAIGLAILVVFF).

The protein belongs to the complex I subunit 4L family. As to quaternary structure, NDH-1 is composed of 14 different subunits. Subunits NuoA, H, J, K, L, M, N constitute the membrane sector of the complex.

The protein localises to the cell inner membrane. The catalysed reaction is a quinone + NADH + 5 H(+)(in) = a quinol + NAD(+) + 4 H(+)(out). Functionally, NDH-1 shuttles electrons from NADH, via FMN and iron-sulfur (Fe-S) centers, to quinones in the respiratory chain. The immediate electron acceptor for the enzyme in this species is believed to be ubiquinone. Couples the redox reaction to proton translocation (for every two electrons transferred, four hydrogen ions are translocated across the cytoplasmic membrane), and thus conserves the redox energy in a proton gradient. In Bartonella tribocorum (strain CIP 105476 / IBS 506), this protein is NADH-quinone oxidoreductase subunit K.